The following is a 201-amino-acid chain: Large ribosomal subunit protein uL4 (201 aa).

A disordered region spans residues glycine 42–arginine 67.

Belongs to the universal ribosomal protein uL4 family. As to quaternary structure, part of the 50S ribosomal subunit.

In terms of biological role, one of the primary rRNA binding proteins, this protein initially binds near the 5'-end of the 23S rRNA. It is important during the early stages of 50S assembly. It makes multiple contacts with different domains of the 23S rRNA in the assembled 50S subunit and ribosome. Functionally, forms part of the polypeptide exit tunnel. This chain is Large ribosomal subunit protein uL4, found in Legionella pneumophila (strain Lens).